Reading from the N-terminus, the 486-residue chain is tRNA (uracil-5-)-methyltransferase homolog B (486 aa).

Residues Gln305, Glu355, and Asn405 each contribute to the S-adenosyl-L-methionine site. Cys433 serves as the catalytic Nucleophile. The active-site Proton acceptor is Glu479.

Belongs to the class I-like SAM-binding methyltransferase superfamily. RNA M5U methyltransferase family.

The protein localises to the mitochondrion matrix. The enzyme catalyses uridine(54) in tRNA + S-adenosyl-L-methionine = 5-methyluridine(54) in tRNA + S-adenosyl-L-homocysteine + H(+). It carries out the reaction a uridine in 12S rRNA + S-adenosyl-L-methionine = a 5-methyluridine in 12S rRNA + S-adenosyl-L-homocysteine + H(+). Mitochondrial S-adenosyl-L-methionine-dependent methyltransferase that catalyzes the formation of 5-methyl-uridine in tRNAs and 12S rRNA. Catalyzes the methylation of uridine at position 54 (m5U54) in all tRNAs. Specifically methylates the uridine in position 429 of 12S rRNA (m5U429). Does not affect RNA stability or mitochondrial translation. The sequence is that of tRNA (uracil-5-)-methyltransferase homolog B (TRMT2B) from Pongo abelii (Sumatran orangutan).